The sequence spans 191 residues: Ribonuclease HII (191 aa).

Positions 16–191 (INLIGIDEAG…KLHRKSFKLL (176 aa)) constitute an RNase H type-2 domain. Asp22, Glu23, and Asp110 together coordinate a divalent metal cation.

It belongs to the RNase HII family. The cofactor is Mn(2+). Mg(2+) serves as cofactor.

It is found in the cytoplasm. The enzyme catalyses Endonucleolytic cleavage to 5'-phosphomonoester.. In terms of biological role, endonuclease that specifically degrades the RNA of RNA-DNA hybrids. The sequence is that of Ribonuclease HII from Campylobacter jejuni subsp. doylei (strain ATCC BAA-1458 / RM4099 / 269.97).